Here is a 282-residue protein sequence, read N- to C-terminus: Protein MGF 505-3R (282 aa).

This sequence belongs to the asfivirus MGF 505 family.

In terms of biological role, plays a role in virus cell tropism, and may be required for efficient virus replication in macrophages. This is Protein MGF 505-3R from Ornithodoros (relapsing fever ticks).